The sequence spans 356 residues: tRNA N6-adenosine threonylcarbamoyltransferase (356 aa).

Fe cation-binding residues include His-110 and His-114. Substrate is bound by residues 133–137, Asp-166, Gly-179, and Asn-276; that span reads LVSGG. Position 304 (Asp-304) interacts with Fe cation.

The protein belongs to the KAE1 / TsaD family. It depends on Fe(2+) as a cofactor.

The protein resides in the cytoplasm. It catalyses the reaction L-threonylcarbamoyladenylate + adenosine(37) in tRNA = N(6)-L-threonylcarbamoyladenosine(37) in tRNA + AMP + H(+). Required for the formation of a threonylcarbamoyl group on adenosine at position 37 (t(6)A37) in tRNAs that read codons beginning with adenine. Is involved in the transfer of the threonylcarbamoyl moiety of threonylcarbamoyl-AMP (TC-AMP) to the N6 group of A37, together with TsaE and TsaB. TsaD likely plays a direct catalytic role in this reaction. The sequence is that of tRNA N6-adenosine threonylcarbamoyltransferase from Teredinibacter turnerae (strain ATCC 39867 / T7901).